A 214-amino-acid polypeptide reads, in one-letter code: Variable small protein 24 (214 aa).

Residues 1–18 (MRKRISAIIMTLFMVFMS) form the signal peptide. Residue C19 is the site of N-palmitoyl cysteine attachment. C19 carries S-diacylglycerol cysteine lipidation. The segment at 146–172 (TELGKKDASDDDTKKAIKKDNSDKTKG) is disordered.

This sequence belongs to the variable small protein (Vsp) family.

It is found in the cell outer membrane. Its function is as follows. The Vlp and Vsp proteins are antigenically distinct proteins, only one vlp or vsp gene is transcriptionally active at any one time. Switching between these genes is a mechanism of host immune response evasion. This is Variable small protein 24 from Borrelia hermsii.